A 989-amino-acid polypeptide reads, in one-letter code: E3 ubiquitin-protein ligase Arkadia (989 aa).

Glycyl lysine isopeptide (Lys-Gly) (interchain with G-Cter in SUMO2) cross-links involve residues Lys-19, Lys-33, Lys-46, Lys-58, Lys-72, Lys-86, Lys-95, and Lys-109. The interval 63 to 195 (FSHLCDDSQK…TEADPVPSLL (133 aa)) is disordered. The span at 65 to 88 (HLCDDSQKQEKDMTGNQQEQEKSG) shows a compositional bias: basic and acidic residues. Residues 97-109 (QQAGPSYVQNCVK) are compositionally biased toward polar residues. Positions 110–120 (ENQEILGRRQQ) are enriched in basic and acidic residues. Positions 131–144 (SSLSECLSSPSSSL) are enriched in low complexity. A Glycyl lysine isopeptide (Lys-Gly) (interchain with G-Cter in SUMO2) cross-link involves residue Lys-172. A compositionally biased stretch (basic residues) spans 173 to 183 (SRSHSARSHKW). Glycyl lysine isopeptide (Lys-Gly) (interchain with G-Cter in SUMO2) cross-links involve residues Lys-197 and Lys-217. Residues 213-293 (KRLVKSSSSQ…PSNPAAPSGS (81 aa)) are disordered. The interaction with AXIN1 stretch occupies residues 240–402 (ALAQRKYALL…VPTTSARMDS (163 aa)). Low complexity-rich tracts occupy residues 248-270 (LLSS…SSST) and 278-291 (ASAS…AAPS). The SUMO interaction motif 1 (SIM) signature appears at 298 to 302 (VVVIE). The SUMO interaction motif 2 (SIM) signature appears at 323–329 (EVEIVTV). The segment at 335-367 (SRSTLGHSRSHWSQGSSSHTGRPQESRNRSRIS) is disordered. Residues 345–355 (HWSQGSSSHTG) are compositionally biased toward low complexity. An SUMO interaction motif 3 (SIM) motif is present at residues 380 to 384 (VVDLT). Disordered stretches follow at residues 388 to 475 (DEPT…MPRL), 506 to 559 (HGHH…YHDQ), and 641 to 675 (MPPP…PPPQ). Polar residues predominate over residues 393 to 451 (VPTTSARMDSQTTSASINNSNPSTSEQASDTTSTVASSQPSTVSETEATLTSNSATGSS). Basic residues predominate over residues 506-520 (HGHHFQHHHHHHHTP). Over residues 548 to 558 (ANSSSGSSYHD) the composition is skewed to polar residues. The ubiquitin binding stretch occupies residues 902–904 (YPH). Glycyl lysine isopeptide (Lys-Gly) (interchain with G-Cter in SUMO2) cross-links involve residues Lys-918 and Lys-922. Cys-937 and Cys-940 together coordinate Zn(2+). The segment at 937–978 (CTICLSILEEGEDVRRLPCMHLFHQVCVDQWLITNKKCPICR) adopts an RING-type; atypical zinc-finger fold. The interval 952 to 956 (RLPCM) is ubiquitin binding. The Zn(2+) site is built by His-960 and Cys-963.

Belongs to the Arkadia family. Monomer. Interacts with SMAD6, SMAD7, AXIN1, AXIN2 and SKIL isoform SNON. Interacts with (phosphorylated) SMAD2 and SMAD3. Part of a complex containing RNF111, AXIN1 and SMAD7. Interacts (via SIM domains) with SUMO1 and SUMO2. In terms of tissue distribution, ubiquitously expressed.

The protein resides in the nucleus. Its subcellular location is the cytoplasm. It localises to the PML body. It catalyses the reaction S-ubiquitinyl-[E2 ubiquitin-conjugating enzyme]-L-cysteine + [acceptor protein]-L-lysine = [E2 ubiquitin-conjugating enzyme]-L-cysteine + N(6)-ubiquitinyl-[acceptor protein]-L-lysine.. It participates in protein modification; protein ubiquitination. Binds free ubiquitin non-covalently via its RING-type zinc finger. Ubiquitin-binding leads to enhance the E3 ubiquitin-protein ligase activity by stabilizing the ubiquitin-conjugating enzyme E2 (donor ubiquitin) in the 'closed' conformation and activating ubiquitin transfer. In terms of biological role, E3 ubiquitin-protein ligase required for mesoderm patterning during embryonic development. Acts as an enhancer of the transcriptional responses of the SMAD2/SMAD3 effectors, which are activated downstream of BMP. Acts by mediating ubiquitination and degradation of SMAD inhibitors such as SMAD7, inducing their proteasomal degradation and thereby enhancing the transcriptional activity of TGF-beta and BMP. In addition to enhance transcription of SMAD2/SMAD3 effectors, also regulates their turnover by mediating their ubiquitination and subsequent degradation, coupling their activation with degradation, thereby ensuring that only effectors 'in use' are degraded. Activates SMAD3/SMAD4-dependent transcription by triggering signal-induced degradation of SNON isoform of SKIL. Associates with UBE2D2 as an E2 enzyme. Specifically binds polysumoylated chains via SUMO interaction motifs (SIMs) and mediates ubiquitination of sumoylated substrates. Catalyzes 'Lys-63'-linked ubiquitination of sumoylated XPC in response to UV irradiation, promoting nucleotide excision repair. Mediates ubiquitination and degradation of sumoylated PML. The regulation of the BMP-SMAD signaling is however independent of sumoylation and is not dependent of SUMO interaction motifs (SIMs). The protein is E3 ubiquitin-protein ligase Arkadia of Mus musculus (Mouse).